The chain runs to 245 residues: 1-(5-phosphoribosyl)-5-[(5-phosphoribosylamino)methylideneamino] imidazole-4-carboxamide isomerase (245 aa).

Residue Asp-8 is the Proton acceptor of the active site. Asp-130 serves as the catalytic Proton donor.

Belongs to the HisA/HisF family.

The protein localises to the cytoplasm. The enzyme catalyses 1-(5-phospho-beta-D-ribosyl)-5-[(5-phospho-beta-D-ribosylamino)methylideneamino]imidazole-4-carboxamide = 5-[(5-phospho-1-deoxy-D-ribulos-1-ylimino)methylamino]-1-(5-phospho-beta-D-ribosyl)imidazole-4-carboxamide. It functions in the pathway amino-acid biosynthesis; L-histidine biosynthesis; L-histidine from 5-phospho-alpha-D-ribose 1-diphosphate: step 4/9. The chain is 1-(5-phosphoribosyl)-5-[(5-phosphoribosylamino)methylideneamino] imidazole-4-carboxamide isomerase from Pseudomonas savastanoi pv. phaseolicola (strain 1448A / Race 6) (Pseudomonas syringae pv. phaseolicola (strain 1448A / Race 6)).